Reading from the N-terminus, the 706-residue chain is Ribosomal RNA large subunit methyltransferase K/L (706 aa).

A THUMP domain is found at 43–154; that stretch reads LMYQSLLWSR…RDMASVALDL (112 aa).

The protein belongs to the methyltransferase superfamily. RlmKL family.

Its subcellular location is the cytoplasm. It catalyses the reaction guanosine(2445) in 23S rRNA + S-adenosyl-L-methionine = N(2)-methylguanosine(2445) in 23S rRNA + S-adenosyl-L-homocysteine + H(+). The catalysed reaction is guanosine(2069) in 23S rRNA + S-adenosyl-L-methionine = N(2)-methylguanosine(2069) in 23S rRNA + S-adenosyl-L-homocysteine + H(+). Specifically methylates the guanine in position 2445 (m2G2445) and the guanine in position 2069 (m7G2069) of 23S rRNA. The chain is Ribosomal RNA large subunit methyltransferase K/L from Yersinia enterocolitica serotype O:8 / biotype 1B (strain NCTC 13174 / 8081).